A 527-amino-acid polypeptide reads, in one-letter code: UDP-glucuronosyltransferase 2A1 (527 aa).

The first 20 residues, 1-20, serve as a signal peptide directing secretion; it reads MLKNILLWSLQLSLLGMSLG. The Extracellular segment spans residues 21-490; sequence GNVLIWPMEG…LSWFQYHSLD (470 aa). Asn49 carries N-linked (GlcNAc...) asparagine glycosylation. Lys134 carries the post-translational modification N6-succinyllysine. Residue Asn313 is glycosylated (N-linked (GlcNAc...) asparagine). Residues 491–507 traverse the membrane as a helical segment; the sequence is VIGFLLACMASAILLVI. The Cytoplasmic portion of the chain corresponds to 508–527; sequence KCCLFVFQKIGKTXKKNKRD.

This sequence belongs to the UDP-glycosyltransferase family. As to expression, olfactory epithelium. Mainly found in the sustentacular cells and to a lesser extent in Bowman's gland cells. Also expressed in the olfactory sensory neuron nuclei. Neuronal localization within the olfactory bulb is mainly found in the deeper granular cells.

Its subcellular location is the membrane. The catalysed reaction is glucuronate acceptor + UDP-alpha-D-glucuronate = acceptor beta-D-glucuronoside + UDP + H(+). It catalyses the reaction 16beta,17beta-estriol + UDP-alpha-D-glucuronate = 16beta,17beta-estriol 16-O-(beta-D-glucuronate) + UDP + H(+). It carries out the reaction 16alpha,17alpha-estriol + UDP-alpha-D-glucuronate = 16alpha,17alpha-estriol 16-O-(beta-D-glucuronate) + UDP + H(+). The enzyme catalyses 17alpha-estradiol + UDP-alpha-D-glucuronate = 17alpha-estradiol 17-O-(beta-D-glucuronate) + UDP + H(+). The catalysed reaction is 17alpha-estradiol + UDP-alpha-D-glucuronate = 17alpha-estradiol 3-O-(beta-D-glucuronate) + UDP + H(+). It catalyses the reaction 17beta-estradiol + UDP-alpha-D-glucuronate = 17beta-estradiol 3-O-(beta-D-glucuronate) + UDP + H(+). It carries out the reaction 17beta-estradiol + UDP-alpha-D-glucuronate = 17beta-estradiol 17-O-(beta-D-glucuronate) + UDP + H(+). The enzyme catalyses testosterone + UDP-alpha-D-glucuronate = testosterone 17-O-(beta-D-glucuronate) + UDP + H(+). The catalysed reaction is epitestosterone + UDP-alpha-D-glucuronate = epitestosterone 17-O-(beta-D-glucuronate) + UDP + H(+). It catalyses the reaction lithocholate + UDP-alpha-D-glucuronate = lithocholoyl-3-O-(beta-D-glucuronate) + UDP + H(+). It carries out the reaction lithocholate + UDP-alpha-D-glucuronate = lithocholoyl-24-O-(beta-D-glucuronate) + UDP. The enzyme catalyses deoxycholate + UDP-alpha-D-glucuronate = deoxycholoyl-24-O-(beta-D-glucuronate) + UDP. The catalysed reaction is hyodeoxycholate + UDP-alpha-D-glucuronate = hyodeoxycholate 6-O-(beta-D-glucuronate) + UDP + H(+). It catalyses the reaction hyocholate + UDP-alpha-D-glucuronate = hyocholoyl-24-O-(beta-D-glucuronate) + UDP. Functionally, UDP-glucuronosyltransferase (UGT) that catalyzes phase II biotransformation reactions in which lipophilic substrates are conjugated with glucuronic acid to increase the metabolite's water solubility, thereby facilitating excretion into either the urine or bile. Essential for the elimination and detoxification of drugs, xenobiotics and endogenous compounds. Catalyzes the glucuronidation of endogenous steroid hormones such as androgens (testosterones) and estrogens (estradiol and estriol). Contributes to bile acid (BA) detoxification by catalyzing the glucuronidation of BA substrates, which are natural detergents for dietary lipids absorption. Shows a high affinity to aliphatic odorants such as citronellol as well as olfactory tissue specificity, and therefore may be involved in olfaction. This Rattus norvegicus (Rat) protein is UDP-glucuronosyltransferase 2A1.